A 798-amino-acid polypeptide reads, in one-letter code: Peregrinol diphosphate synthase TPS1, chloroplastic (798 aa).

A chloroplast-targeting transit peptide spans 1–25 (MASLSTPNINNTTFVNSKTQLPAVK). Lysine 243 contacts substrate. Mg(2+) is bound by residues aspartate 377 and aspartate 379. The short motif at 377–380 (DLDD) is the DXDD motif element. Lysine 463 is a substrate binding site.

The protein belongs to the terpene synthase family. It depends on Mg(2+) as a cofactor. As to expression, mostly expressed in trichomes of leaves and fruits.

Its subcellular location is the plastid. It localises to the chloroplast. It carries out the reaction peregrinol diphosphate = (2E,6E,10E)-geranylgeranyl diphosphate + H2O. It functions in the pathway secondary metabolite biosynthesis; terpenoid biosynthesis. In terms of biological role, involved in the biosynthesis of labdane-type diterpenoid including cleroda-dienols, and peregrinol lactones and furan derivatives, dopaminergic diterpenoids that can bind to dopamine receptors in the human pituitary gland, have probably ability to lower prolactin levels, and are used to treat menstrual cycle disorders (e.g. premenstrual syndrome and mastodynia). Terpene synthase that produces peregrinol diphosphate from geranylgeranyl diphosphate (GGPP). The protein is Peregrinol diphosphate synthase TPS1, chloroplastic of Vitex agnus-castus (Chaste tree).